A 272-amino-acid polypeptide reads, in one-letter code: Energy-coupling factor transporter ATP-binding protein EcfA1 (272 aa).

The ABC transporter domain maps to 5-239; that stretch reads IKIDNLKYSY…RKALHENGLE (235 aa). 37 to 44 lines the ATP pocket; sequence GHNGSGKS. E163 serves as the catalytic Proton acceptor.

It belongs to the ABC transporter superfamily. Energy-coupling factor EcfA family. In terms of assembly, forms a stable energy-coupling factor (ECF) transporter complex probably composed of 2 membrane-embedded substrate-binding proteins (S component), 2 ATP-binding proteins (A component) and 2 transmembrane proteins (T component). This complex interacts with a number of substrate-specific components, including FolT, PanT and RibU for 5-formyltetrahydrofolate, pantothenate and riboflavin respectively.

The protein resides in the cell membrane. Its function is as follows. ATP-binding (A) component of a common energy-coupling factor (ECF) ABC-transporter complex. Unlike classic ABC transporters this ECF transporter provides the energy necessary to transport a number of different substrates including 5-formyltetrahydrofolate, pantothenate and riboflavin. Expression of the complex plus FolT in E.coli allows 5-formyltetrahydrofolate uptake; 5-formyltetrahydrofolate is not taken up in the absence of FolT or the EcfA1A2T complex. The sequence is that of Energy-coupling factor transporter ATP-binding protein EcfA1 from Leuconostoc mesenteroides subsp. mesenteroides (strain ATCC 8293 / DSM 20343 / BCRC 11652 / CCM 1803 / JCM 6124 / NCDO 523 / NBRC 100496 / NCIMB 8023 / NCTC 12954 / NRRL B-1118 / 37Y).